A 472-amino-acid chain; its full sequence is Tubulin gamma chain (472 aa).

142–148 (AGGTGSG) contributes to the GTP binding site.

It belongs to the tubulin family.

It localises to the cytoplasm. The protein localises to the cytoskeleton. It is found in the microtubule organizing center. Tubulin is the major constituent of microtubules. The gamma chain is found at microtubule organizing centers (MTOC) such as the spindle poles, suggesting that it is involved in the minus-end nucleation of microtubule assembly. The sequence is that of Tubulin gamma chain (TUBG) from Anemia phyllitidis (Fern).